A 567-amino-acid chain; its full sequence is UPF0313 protein TM_0337 (567 aa).

The region spanning 288 to 560 is the Radical SAM core domain; sequence KAIETVKFSI…NKMKENVLFK (273 aa). Residues Cys303, Cys307, and Cys310 each contribute to the [4Fe-4S] cluster site.

It belongs to the UPF0313 family. [4Fe-4S] cluster is required as a cofactor.

The polypeptide is UPF0313 protein TM_0337 (Thermotoga maritima (strain ATCC 43589 / DSM 3109 / JCM 10099 / NBRC 100826 / MSB8)).